Reading from the N-terminus, the 315-residue chain is Mannose-6-phosphate isomerase ManA (315 aa).

Zn(2+) contacts are provided by His97, Glu115, and His172. The active site involves Arg192.

It belongs to the mannose-6-phosphate isomerase type 1 family. It depends on Zn(2+) as a cofactor.

It catalyses the reaction D-mannose 6-phosphate = D-fructose 6-phosphate. The chain is Mannose-6-phosphate isomerase ManA (manA) from Bacillus subtilis (strain 168).